A 485-amino-acid chain; its full sequence is Glutamyl-tRNA(Gln) amidotransferase subunit A (485 aa).

Residues K75 and S150 each act as charge relay system in the active site. The active-site Acyl-ester intermediate is S174.

Belongs to the amidase family. GatA subfamily. As to quaternary structure, heterotrimer of A, B and C subunits.

It catalyses the reaction L-glutamyl-tRNA(Gln) + L-glutamine + ATP + H2O = L-glutaminyl-tRNA(Gln) + L-glutamate + ADP + phosphate + H(+). In terms of biological role, allows the formation of correctly charged Gln-tRNA(Gln) through the transamidation of misacylated Glu-tRNA(Gln) in organisms which lack glutaminyl-tRNA synthetase. The reaction takes place in the presence of glutamine and ATP through an activated gamma-phospho-Glu-tRNA(Gln). This is Glutamyl-tRNA(Gln) amidotransferase subunit A from Trichodesmium erythraeum (strain IMS101).